Reading from the N-terminus, the 1193-residue chain is K(+) efflux antiporter 1, chloroplastic (1193 aa).

A chloroplast-targeting transit peptide spans 1 to 49; the sequence is MEYASTFQRPILFHGGDGASYCFPNRLISPKGISITSGDSKVHSCFRLR. Topologically, residues 50–585 are stromal; sequence RNVAQSGTLN…MIPHQEVNEE (536 aa). The tract at residues 103 to 135 is disordered; it reads SLGNADSNDHRIGESSESSDETEATDLKDARVE. The stretch at 131-355 forms a coiled coil; that stretch reads DARVENDTDS…RAEKSLSISQ (225 aa). An N6-acetyllysine; by NSI modification is found at lysine 168. Residues 351 to 364 show a composition bias toward polar residues; that stretch reads LSISQTPEETQGQL. Disordered stretches follow at residues 351-372 and 421-474; these read LSIS…TSQE and QPYE…NSPK. The segment covering 439–465 has biased composition (basic and acidic residues); that stretch reads KVVEADSEKPKINVQTKKQETQKDLPK. The chain crosses the membrane as a helical span at residues 586–606; the sequence is EASLFDFLWLLLASVIFVPLF. Residues 607–612 are Chloroplast intermembrane-facing; it reads QKIPGG. A helical membrane pass occupies residues 613–633; sequence SPVLGYLAAGILIGPYGLSII. The Stromal segment spans residues 634 to 640; that stretch reads RNVHGTR. Residues 641 to 661 form a helical membrane-spanning segment; it reads AIAEFGVVFLLFNIGLELSVE. Residues 662–668 lie on the Chloroplast intermembrane side of the membrane; sequence RLSSMKK. A helical membrane pass occupies residues 669-689; that stretch reads YVFGLGSAQVLVTAAVVGLLA. At 690–698 the chain is on the stromal side; the sequence is HYVAGQAGP. A helical membrane pass occupies residues 699–719; that stretch reads AAIVIGNGLALSSTAVVLQVL. Over 720–733 the chain is Chloroplast intermembrane; it reads QERGESTSRHGRAS. Residues 734–754 form a helical membrane-spanning segment; that stretch reads FSVLLFQDLAVVVLLILIPLI. The Stromal segment spans residues 755 to 766; it reads SPNSSKGGIGFQ. The helical transmembrane segment at 767-787 threads the bilayer; that stretch reads AIAEALGLAAVKAAVAITAII. Residues 788 to 827 are Chloroplast intermembrane-facing; sequence AGGRLLLRPIYKQIAENRNAEIFSANTLLVILGTSLLTAR. The chain crosses the membrane as a helical span at residues 828-848; sequence AGLSMALGAFLAGLLLAETEF. Topologically, residues 849–860 are stromal; it reads SLQVESDIAPYR. Residues 861–881 traverse the membrane as a helical segment; it reads GLLLGLFFMTVGMSIDPKLLL. The Chloroplast intermembrane portion of the chain corresponds to 882–883; that stretch reads SN. The chain crosses the membrane as a helical span at residues 884–904; that stretch reads FPVIVGTLGLLIVGKTMLVVI. The Stromal segment spans residues 905–912; it reads MGKLFGIS. A helical membrane pass occupies residues 913–933; that stretch reads IISAIRVGLLLAPGGEFAFVA. Topologically, residues 934 to 948 are chloroplast intermembrane; the sequence is FGEAVNQGIMSPQLS. The chain crosses the membrane as a helical span at residues 949 to 969; it reads SLLFLVVGISMAITPWLAAGG. Topologically, residues 970–1193 are stromal; sequence QLIASRFELH…QIIEGGTVVI (224 aa). The region spanning 995–1112 is the RCK N-terminal domain; that stretch reads QGHIIICGFG…EKAGATAVVP (118 aa). The tract at residues 1165-1184 is disordered; that stretch reads GYSRTSKPKPQPSDASGDNQ.

Belongs to the monovalent cation:proton antiporter 2 (CPA2) transporter (TC 2.A.37) family. KEA (TC 2.A.37.1) subfamily. In terms of processing, acetylated at Lys-168 by the stromal acetyltransferase enzyme NSI. In terms of tissue distribution, expressed in shoots and roots. Mainly localized to leaf veins, hypocotyls, mesophylls and guard cells. Accumulates at high levels in small and dividing plastids (at protein level).

Its subcellular location is the plastid. It localises to the chloroplast inner membrane. The enzyme catalyses K(+)(in) + H(+)(out) = K(+)(out) + H(+)(in). Repressed by sodium ions Na(+). Electroneutral K(+)/H(+) efflux antiporter involved in chloroplastic K(+) homeostasis and osmotic adjustment, especially during plastid division and thylakoid membrane formation. Collaboratively with KEA2, adjusts alkaline stromal pH upon light to dark transitions in plastids. Together with KEA2, critical for chloroplast development, including chloroplast RNA-metabolism (e.g. rRNA maturation, polysome loading and RNA-protein interactions) and plastid gene expression (PGE), ion homeostasis, and photosynthesis. Contributes, during early seedling development, to the regulation of photosynthesis and abscisic acid- (ABA-) mediated primary root growth in a sucrose-dependent manner. Involved in the regulation of reactive oxygen and nitrogen species (ROS and RNS) metabolism. Required in roots for rapid hyperosmotic-induced Ca(2+) responses and for osmo-sensory potentiation in hyperosmotic conditions. May counteract resilience to drought and salt stress, involving photorespiratory pathway and stomata closure. The polypeptide is K(+) efflux antiporter 1, chloroplastic (Arabidopsis thaliana (Mouse-ear cress)).